A 205-amino-acid polypeptide reads, in one-letter code: LexA repressor (205 aa).

Positions 28-48 form a DNA-binding region, H-T-H motif; it reads RAEIAHKLGFRSANSAEEHLK. Active-site for autocatalytic cleavage activity residues include S122 and K159.

The protein belongs to the peptidase S24 family. Homodimer.

It carries out the reaction Hydrolysis of Ala-|-Gly bond in repressor LexA.. In terms of biological role, represses a number of genes involved in the response to DNA damage (SOS response), including recA and lexA. In the presence of single-stranded DNA, RecA interacts with LexA causing an autocatalytic cleavage which disrupts the DNA-binding part of LexA, leading to derepression of the SOS regulon and eventually DNA repair. This chain is LexA repressor, found in Idiomarina loihiensis (strain ATCC BAA-735 / DSM 15497 / L2-TR).